We begin with the raw amino-acid sequence, 323 residues long: MSGIWVHLSLIFISVSGPLSKGENAHMAGINSEGLKLNITEANSCQEGLYREHQFCCQPCPPGKRKNGDCKRDGDTPECVLCSEGNEYTDKSHHSDKCIRCSICDEEHGLEVEQNCTRTRNTKCRCKSNFFCNSSPCEHCNPCTTCEHGIIEKCTPTSNTKCKGSRSHANSLWALLILLIPIVLIIYKVVKSRERNKKNDYCNSAASNDEGRQLNLTDVDLGKYIPSIAEQMRITEVKEFVRKNGMEEAKIDDIMHDNVHETAEQKVQLLRNWYQSHGKKNAYCTLTKSLPKALAEKICDIVMKDITNERENANLQNENENLV.

The N-terminal stretch at Met-1 to Gly-22 is a signal peptide. At Glu-23–Asn-170 the chain is on the extracellular side. N-linked (GlcNAc...) asparagine glycosylation is present at Asn-38. Intrachain disulfides connect Cys-45–Cys-56, Cys-57–Cys-70, Cys-60–Cys-79, Cys-82–Cys-98, Cys-101–Cys-116, Cys-104–Cys-124, Cys-126–Cys-140, Cys-143–Cys-154, and Cys-146–Cys-162. 3 TNFR-Cys repeats span residues Cys-45–Val-80, Leu-81–Cys-124, and Arg-125–Lys-163. The N-linked (GlcNAc...) asparagine glycan is linked to Asn-115. A helical transmembrane segment spans residues Ser-171 to Lys-188. Over Val-189–Val-323 the chain is Cytoplasmic. The interval Ser-204 to Asp-305 is interaction with HIPK3. Positions Gly-222–Met-246 are interaction with CALM. One can recognise a Death domain in the interval Lys-238–Ile-306.

In terms of assembly, binds DAXX. Interacts with HIPK3. Part of a complex containing HIPK3 and FADD. Binds RIPK1 and FAIM2. Interacts with BABAM2 and FEM1B. Interacts with FADD. Interacts directly (via DED domain) with NOL3 (via CARD domain); inhibits death-inducing signaling complex (DISC) assembly by inhibiting the increase in FAS-FADD binding induced by FAS activation. Interacts with CALM. In the absence of stimulation, interacts with BIRC2, DDX3X and GSK3B. The interaction with BIRC2 and DDX3X is further enhanced upon receptor stimulation and accompanied by DDX3X and BIRC2 cleavage. In terms of processing, palmitoylated. Palmitoylation by ZDHHC7 prevents the lysosomal degradation of FAS regulating its expression at the plasma membrane. In terms of tissue distribution, detected in peripheral blood lymphocytes, thymus, spleen, lung and ovary.

It is found in the cell membrane. The protein localises to the membrane raft. Functionally, receptor for TNFSF6/FASLG. The adapter molecule FADD recruits caspase-8 to the activated receptor. The resulting death-inducing signaling complex (DISC) performs caspase-8 proteolytic activation which initiates the subsequent cascade of caspases (aspartate-specific cysteine proteases) mediating apoptosis. FAS-mediated apoptosis may have a role in the induction of peripheral tolerance, in the antigen-stimulated suicide of mature T-cells, or both. In Bos taurus (Bovine), this protein is Tumor necrosis factor receptor superfamily member 6 (FAS).